The sequence spans 309 residues: Glutaminase (309 aa).

Ser-65, Asn-117, Glu-162, Asn-169, Tyr-193, Tyr-245, and Val-263 together coordinate substrate.

The protein belongs to the glutaminase family. Homotetramer.

It catalyses the reaction L-glutamine + H2O = L-glutamate + NH4(+). This Bacillus mycoides (strain KBAB4) (Bacillus weihenstephanensis) protein is Glutaminase.